We begin with the raw amino-acid sequence, 198 residues long: Orotate phosphoribosyltransferase (198 aa).

5-phospho-alpha-D-ribose 1-diphosphate-binding positions include Arg-108, Lys-109, Lys-112, His-114, and 135-143 (EDVVTTGKS). Orotate-binding residues include Thr-139 and Arg-167.

The protein belongs to the purine/pyrimidine phosphoribosyltransferase family. PyrE subfamily. As to quaternary structure, homodimer. Mg(2+) is required as a cofactor.

It carries out the reaction orotidine 5'-phosphate + diphosphate = orotate + 5-phospho-alpha-D-ribose 1-diphosphate. It participates in pyrimidine metabolism; UMP biosynthesis via de novo pathway; UMP from orotate: step 1/2. Its function is as follows. Catalyzes the transfer of a ribosyl phosphate group from 5-phosphoribose 1-diphosphate to orotate, leading to the formation of orotidine monophosphate (OMP). The polypeptide is Orotate phosphoribosyltransferase (Synechocystis sp. (strain ATCC 27184 / PCC 6803 / Kazusa)).